Here is a 305-residue protein sequence, read N- to C-terminus: Ribonuclease BN (305 aa).

H64, H66, D68, H69, H141, D212, and H270 together coordinate Zn(2+). The active-site Proton acceptor is the D68.

It belongs to the RNase Z family. RNase BN subfamily. Homodimer. It depends on Zn(2+) as a cofactor.

In terms of biological role, zinc phosphodiesterase, which has both exoribonuclease and endoribonuclease activities. The chain is Ribonuclease BN from Escherichia coli O157:H7.